The sequence spans 379 residues: Multicilin (379 aa).

The necessary and sufficient for its degradation during the cell cycle stretch occupies residues 1-129 (MQACEGSAAG…AMDDLIADSS (129 aa)). 2 disordered regions span residues 26-71 (SRRT…APLP) and 88-107 (LGTE…PSLQ). A compositionally biased stretch (polar residues) spans 92–107 (ASPSGDSSASQNPSLQ). The segment at 130–379 (SLMSPPLTNS…GGYKFRWVPS (250 aa)) is necessary and sufficient for proper nuclear localization. The tract at residues 171 to 241 (PPPTEQYWKE…SVLDKLMITQ (71 aa)) is necessary and sufficient for interaction with GMNN and sufficient for homodimerization. The stretch at 175-223 (EQYWKEVADQNQRALGTALIENNQLHVTLTQKQEEIASLRERNVQLKEL) forms a coiled coil. The segment covering 291-309 (NRDPKRPRLQPEPDSKDCS) has biased composition (basic and acidic residues). The segment at 291-312 (NRDPKRPRLQPEPDSKDCSSRN) is disordered.

This sequence belongs to the geminin family. In terms of assembly, heterodimer (via coiled-coil domain) with GMNN (via coiled-coil domain); targets GMNN to the nucleus. Can form homodimers (in vitro, via coiled-coil domain), but these are much less stable than the heterodimer formed with GMNN.

It localises to the nucleus. In terms of biological role, transcription regulator specifically required for multiciliate cell differentiation. Acts in a multiprotein complex containing E2F4 and E2F5 that binds and activates genes required for centriole biogenesis. Required for the deuterosome-mediated acentriolar pathway. Plays a role in mitotic cell cycle progression by promoting cell cycle exit. Modulates GMNN activity by reducing its affinity for CDT1. The polypeptide is Multicilin (Mcidas) (Mus musculus (Mouse)).